Consider the following 489-residue polypeptide: Protein-export membrane protein SecD (489 aa).

6 consecutive transmembrane segments (helical) span residues 17 to 37 (VLIVLVLVILSVLSIYAIPPA), 328 to 348 (FIQIVCIAAAILGLLAVAFMV), 356 to 376 (SIVVPMILVNLSEIIILLGIA), 384 to 404 (LASIAGLIAVIGTGIDQLVVI), 428 to 448 (LGIITVSASTTIFAMLPLALM), and 450 to 470 (LSTLKGFAIITILGVLIGVIF).

This sequence belongs to the SecD/SecF family. SecD subfamily. Part of the protein translocation apparatus. Forms a complex with SecF.

The protein localises to the cell membrane. Its function is as follows. Involved in protein export. The polypeptide is Protein-export membrane protein SecD (Methanolacinia petrolearia (strain DSM 11571 / OCM 486 / SEBR 4847) (Methanoplanus petrolearius)).